Here is a 972-residue protein sequence, read N- to C-terminus: 116 kDa U5 small nuclear ribonucleoprotein component (972 aa).

The residue at position 1 (Met-1) is an N-acetylmethionine. The disordered stretch occupies residues 1-53 (MDTDLYDEFGNYIGPELDSDEDDDELGRETKDLDEVDEDEDDDDVGDHDEDHP). Acidic residues-rich tracts occupy residues 17 to 26 (LDSDEDDDEL) and 34 to 48 (DEVDEDEDDDDVGDH). At Ser-19 the chain carries Phosphoserine. A Glycyl lysine isopeptide (Lys-Gly) (interchain with G-Cter in SUMO1); alternate cross-link involves residue Lys-64. Residue Lys-64 forms a Glycyl lysine isopeptide (Lys-Gly) (interchain with G-Cter in SUMO2); alternate linkage. Thr-86 bears the Phosphothreonine mark. The 283-residue stretch at 127–409 (ELIRNVTLCG…GIHLTKEELK (283 aa)) folds into the tr-type G domain. GTP is bound by residues 136–143 (GHLHHGKT), 204–208 (DTPGH), and 258–261 (NKID).

The protein belongs to the TRAFAC class translation factor GTPase superfamily. Classic translation factor GTPase family. EF-G/EF-2 subfamily. Component of the U5 snRNP and the U4/U6-U5 tri-snRNP complex, a building block of the spliceosome. The U4/U6-U5 tri-snRNP complex is composed of the U4, U6 and U5 snRNAs and at least PRPF3, PRPF4, PRPF6, PRPF8, PRPF31, SNRNP200, TXNL4A, SNRNP40, DDX23, CD2BP2, PPIH, SNU13, EFTUD2, SART1 and USP39. Component of the pre-catalytic, catalytic and post-catalytic spliceosome complexes. Component of the minor spliceosome, which splices U12-type introns. Within this complex, interacts with CRIPT. Interacts with ERBB4 and PRPF8. Interacts with PIH1D1. Interacts with RPAP3 and URI1 in a ZNHIT2-dependent manner. Interacts with NRDE2. Interacts with FAM50A. Interacts with UBL5.

It localises to the nucleus. Required for pre-mRNA splicing as component of the spliceosome, including pre-catalytic, catalytic and post-catalytic spliceosomal complexes. Component of the U5 snRNP and the U4/U6-U5 tri-snRNP complex, a building block of the spliceosome. As a component of the minor spliceosome, involved in the splicing of U12-type introns in pre-mRNAs. In Bos taurus (Bovine), this protein is 116 kDa U5 small nuclear ribonucleoprotein component (EFTUD2).